We begin with the raw amino-acid sequence, 149 residues long: Arginine repressor (149 aa).

Belongs to the ArgR family.

It is found in the cytoplasm. The protein operates within amino-acid biosynthesis; L-arginine biosynthesis [regulation]. Regulates arginine biosynthesis genes. This Listeria monocytogenes serotype 4b (strain F2365) protein is Arginine repressor.